The chain runs to 260 residues: Indole-3-glycerol phosphate synthase (260 aa).

It belongs to the TrpC family.

It carries out the reaction 1-(2-carboxyphenylamino)-1-deoxy-D-ribulose 5-phosphate + H(+) = (1S,2R)-1-C-(indol-3-yl)glycerol 3-phosphate + CO2 + H2O. Its pathway is amino-acid biosynthesis; L-tryptophan biosynthesis; L-tryptophan from chorismate: step 4/5. This is Indole-3-glycerol phosphate synthase from Lactiplantibacillus plantarum (strain ATCC BAA-793 / NCIMB 8826 / WCFS1) (Lactobacillus plantarum).